Reading from the N-terminus, the 828-residue chain is MKLSRRSFMKANAVAAAAAAAGLSVPGVARAVVGQQEAIKWDKAPCRFCGTGCGVLVGTQQGRVVACQGDPDAPVNRGLNCIKGYFLPKIMYGKDRLTQPLLRMKNGKYDKEGEFTLITWDQAFDVMEEKFKTALKEKGPESIGMFGSGQWTIWEGYAASKLFKAGFRSNNIDPNARHCMASAVVGFMRTFGMDEPMGCYDDIEQADAFVLWGANMAEMHPILWSRITNRRLSNQNVTVAVLSTYQHRSFELADNGIIFTPQSDLVILNYIANYIIQNNAINQDFFSKHVNLRKGATDIGYGLRPTHPLEKAAKNPGSDASEPMSFEDYKAFVAEYTLEKTAEMTGVPKDQLEQLAQLYADPNKKVISYWTMGFNQHTRGVWANNLVYNLHLLTGKISQPGCGPFSLTGQPSACGTAREVGTFAHRLPADMVVTNEKHRDICEKKWNIPSGTIPAKIGLHAVAQDRALKDGKLNVYWTMCTNNMQAGPNINEERMPGWRDPRNFIIVSDPYPTVSALAADLILPTAMWVEKEGAYGNAERRTQFWRQQVQAPGEAKSDLWQLVQFSRRFKTEEVWPEDLLAKKPELRGKTLYEVLYATPEVSKFPVSELAEDQLNDESRELGFYLQKGLFEEYAWFGRGHGHDLAPFDDYHKARGLRWPVVNGKETQWRYSEGNDPYVKAGEGYKFYGKPDGKAVIFALPFEPAAEAPDEEYDLWLSTGRVLEHWHTGSMTRRVPELHRAFPEAVLFIHPLDAKARDLRRGDKVKVVSRRGEVISIVETRGRNRPPQGLVYMPFFDAAQLVNKLTLDATDPLSKETDFKKCAVKLEKV.

The segment at residues 1 to 31 (MKLSRRSFMKANAVAAAAAAAGLSVPGVARA) is a signal peptide (tat-type signal). Positions 39-95 (IKWDKAPCRFCGTGCGVLVGTQQGRVVACQGDPDAPVNRGLNCIKGYFLPKIMYGKD) constitute a 4Fe-4S Mo/W bis-MGD-type domain. 4 residues coordinate [4Fe-4S] cluster: Cys46, Cys49, Cys53, and Cys81. Residues Lys83, Gln150, Asn175, Cys179, 212–219 (WGANMAEM), 243–247 (STYQH), 262–264 (QSD), Met372, Gln376, Asn482, 508–509 (SD), Lys531, Asp558, and 718–727 (TGRVLEHWHT) contribute to the Mo-bis(molybdopterin guanine dinucleotide) site. Phe794 is a binding site for substrate. Mo-bis(molybdopterin guanine dinucleotide) is bound by residues Asn802 and Lys819.

It belongs to the prokaryotic molybdopterin-containing oxidoreductase family. NasA/NapA/NarB subfamily. As to quaternary structure, component of the periplasmic nitrate reductase NapAB complex composed of NapA and NapB. The cofactor is [4Fe-4S] cluster. Mo-bis(molybdopterin guanine dinucleotide) is required as a cofactor. Predicted to be exported by the Tat system. The position of the signal peptide cleavage has not been experimentally proven.

It localises to the periplasm. The catalysed reaction is 2 Fe(II)-[cytochrome] + nitrate + 2 H(+) = 2 Fe(III)-[cytochrome] + nitrite + H2O. In terms of biological role, catalytic subunit of the periplasmic nitrate reductase complex NapAB. Receives electrons from NapB and catalyzes the reduction of nitrate to nitrite. The sequence is that of Periplasmic nitrate reductase from Shigella boydii serotype 18 (strain CDC 3083-94 / BS512).